Here is a 406-residue protein sequence, read N- to C-terminus: Cysteine desulfurase (406 aa).

Lys226 carries the post-translational modification N6-(pyridoxal phosphate)lysine. The active-site Cysteine persulfide intermediate is the Cys364.

Belongs to the class-V pyridoxal-phosphate-dependent aminotransferase family. Csd subfamily. In terms of assembly, homodimer. Interacts with SufE and the SufBCD complex composed of SufB, SufC and SufD. The interaction with SufE is required to mediate the direct transfer of the sulfur atom from the S-sulfanylcysteine. Pyridoxal 5'-phosphate is required as a cofactor.

It is found in the cytoplasm. It catalyses the reaction (sulfur carrier)-H + L-cysteine = (sulfur carrier)-SH + L-alanine. It carries out the reaction L-selenocysteine + AH2 = hydrogenselenide + L-alanine + A + H(+). It functions in the pathway cofactor biosynthesis; iron-sulfur cluster biosynthesis. Functionally, cysteine desulfurases mobilize the sulfur from L-cysteine to yield L-alanine, an essential step in sulfur metabolism for biosynthesis of a variety of sulfur-containing biomolecules. Component of the suf operon, which is activated and required under specific conditions such as oxidative stress and iron limitation. Acts as a potent selenocysteine lyase in vitro, that mobilizes selenium from L-selenocysteine. Selenocysteine lyase activity is however unsure in vivo. In Enterobacter sp. (strain 638), this protein is Cysteine desulfurase.